Reading from the N-terminus, the 712-residue chain is Anaerobic ribonucleoside-triphosphate reductase (712 aa).

Residues 3-92 enclose the ATP-cone domain; the sequence is PHVMKRDGCK…EYRHDRDIQR (90 aa). The region spanning 583-708 is the Glycine radical domain; it reads KKVNPYDKID…VKRRVKHLGN (126 aa). Zn(2+) is bound by residues cysteine 644, cysteine 647, cysteine 662, and cysteine 665. Residue glycine 681 is modified to Glycine radical.

It belongs to the anaerobic ribonucleoside-triphosphate reductase family. In terms of assembly, forms a tetramer composed of two NrdD and two NrdG subunits.

The catalysed reaction is a ribonucleoside 5'-triphosphate + formate + H(+) = a 2'-deoxyribonucleoside 5'-triphosphate + CO2 + H2O. Its activity is regulated as follows. Activated under anaerobic conditions by NrdG, a tightly associated activase. Activation involves the formation of a glycyl radical at Gly-681. Catalyzes the conversion of ribonucleotides into deoxyribonucleotides, which are required for DNA synthesis and repair. The polypeptide is Anaerobic ribonucleoside-triphosphate reductase (nrdD) (Salmonella typhimurium (strain LT2 / SGSC1412 / ATCC 700720)).